The primary structure comprises 629 residues: MPLAQLVDLWPEVELVHEDTENGHGGPEDRGRHTSKDEVVVKEIPITHHVKEGAEKADQSHFVLLKVLGQGSFGKVFLVRKITPPDANQLYAMKVLKKATLKVRDRVRTKMERDILADVHHPFVVRLHYAFQTEGKLYLILDFLRGGDLFTRLSKEVMFTEEDVKFYLAELALGLDHLHSLGIIYRDLKPENILLDEEGHIKLTDFGLSKEAIDHEKKAYSFCGTVEYMAPEVVNRQGHSHGADWWSYGVLMFEMLTGSLPFQGKDRKETMTLILKAKLGMPQFLSNEAQSLLRALFKRNATNRLGSGVEGAEELKRHPFFSTIDWNKLYRRELSPPFKPSVTQPDDTYYFDTEFTSRTPKDSPGIPPSAGAHQLFRGFSFVAPVLVEEDAKKTSSPPVLSVPKTHSKNVLFTDVYTVRETIGVGSYSVCKRCVHKGTNMEYAVKVIDKSKRDPSEEIEILRRYGQHPNIITLKDVYEECNSIYLVTELMRGGELLDRILRQKFFSEREACSVLFTVCKTVEYLHSQGVVHRDLKPSNILYVDESGDPESIRICDFGFSKQLRAENGLLMTPCYTANFVAPEVLKRQGYDEGCDIWSLGILLYTMLAGYTPFANGPGDTPEEILARIGS.

The region spanning 62-321 (FVLLKVLGQG…AEELKRHPFF (260 aa)) is the Protein kinase 1 domain. Residues 68–76 (LGQGSFGKV) and K94 contribute to the ATP site. The active-site Proton acceptor is the D187. Position 221 is a phosphoserine (S221). The region spanning 322–391 (STIDWNKLYR…VAPVLVEEDA (70 aa)) is the AGC-kinase C-terminal domain. T359 is subject to Phosphothreonine. S363 carries the post-translational modification Phosphoserine. A Phosphoserine; by autocatalysis modification is found at S380. The Protein kinase 2 domain maps to 416–629 (YTVRETIGVG…PEEILARIGS (214 aa)). ATP contacts are provided by residues 422–430 (IGVGSYSVC) and K445. Catalysis depends on D533, which acts as the Proton acceptor. Position 571 is a phosphothreonine (T571).

This sequence belongs to the protein kinase superfamily. AGC Ser/Thr protein kinase family. S6 kinase subfamily. It depends on Mg(2+) as a cofactor. Autophosphorylated on Ser-380, as part of the activation process.

The catalysed reaction is L-seryl-[protein] + ATP = O-phospho-L-seryl-[protein] + ADP + H(+). It carries out the reaction L-threonyl-[protein] + ATP = O-phospho-L-threonyl-[protein] + ADP + H(+). With respect to regulation, activated by multiple phosphorylations on threonine and serine residues. Its function is as follows. Serine/threonine kinase that may play a role in mediating the growth-factor and stress induced activation of transcription. This Xenopus laevis (African clawed frog) protein is Ribosomal protein S6 kinase 2 beta.